The chain runs to 68 residues: Neuronal regeneration-related protein (68 aa).

The interval 21–54 is disordered; that stretch reads MEGRLPKGRLPVPKEVNRKKNDETNAASLTPLGS. The segment covering 44–54 has biased composition (polar residues); it reads TNAASLTPLGS.

As to quaternary structure, interacts with the latency-associated peptides (LAP) of TGFB1 and TGFB2; the interaction results in a decrease in TGFB autoinduction. Interacts with FLNA. Phosphorylated on Ser-59. Phosphorylation decreases stability and activity.

It is found in the cytoplasm. May have roles in neural function and cellular differentiation. Ectopic expression promotes axonal regeneration, induces differentiation of fibroblast into myofibroblast, induces myofibroblast ameboid migration, augments motility of gliomas, and increases retinoic-acid regulation of lipid-droplet biogenesis. Down-regulates the expression of TGFB1 and TGFB2 but not of TGFB3. May play a role in the regulation of alveolar generation. In Macaca fascicularis (Crab-eating macaque), this protein is Neuronal regeneration-related protein (NREP).